Here is a 412-residue protein sequence, read N- to C-terminus: Acetate kinase (412 aa).

Residue asparagine 10 participates in Mg(2+) binding. Residue lysine 17 coordinates ATP. The interval 40–61 (ETSRLAHTPSAGGGAEPRERTG) is disordered. Arginine 95 is a substrate binding site. Aspartate 152 (proton donor/acceptor) is an active-site residue. ATP is bound by residues 212-216 (HLGNG), 286-288 (DMR), and 334-338 (GVGEN). A Mg(2+)-binding site is contributed by glutamate 388.

This sequence belongs to the acetokinase family. As to quaternary structure, homodimer. Requires Mg(2+) as cofactor. The cofactor is Mn(2+).

It localises to the cytoplasm. It catalyses the reaction acetate + ATP = acetyl phosphate + ADP. It participates in metabolic intermediate biosynthesis; acetyl-CoA biosynthesis; acetyl-CoA from acetate: step 1/2. Its function is as follows. Catalyzes the formation of acetyl phosphate from acetate and ATP. Can also catalyze the reverse reaction. The polypeptide is Acetate kinase (Streptomyces griseus subsp. griseus (strain JCM 4626 / CBS 651.72 / NBRC 13350 / KCC S-0626 / ISP 5235)).